The primary structure comprises 362 residues: 4-hydroxytryptamine kinase (362 aa).

Residues Asn37, Lys57, and 118–120 (QDV) contribute to the ATP site. Residue Asp224 is part of the active site. 249-251 (DWE) lines the ATP pocket.

This sequence belongs to the methylthioribose kinase family. As to quaternary structure, monomer. Mg(2+) is required as a cofactor.

The catalysed reaction is 4-hydroxytryptamine + ATP = norbaeocystin + ADP + H(+). It carries out the reaction psilocin + ATP = psilocybin + ADP + H(+). It catalyses the reaction 4-hydroxy-N,N,N-trimethyltryptamine + ATP = aeruginascin + ADP + H(+). It participates in secondary metabolite biosynthesis. 4-hydroxytryptamine kinase; part of the gene cluster that mediates the biosynthesis of psilocybin, a psychotropic tryptamine-derived natural product. The first step in the pathway is the decarboxylation of L-tryptophan to tryptamine by the decarboxylase psiD. 4-hydroxy-L-tryptophan is accepted as substrate by psiD as well. The cytochrome P450 monooxygenase psiH then converts tryptamine to 4-hydroxytryptamine. The kinase psiK catalyzes the 4-O-phosphorylation step by converting 4-hydroxytryptamine into norbaeocystin. The methyltransferase psiM then catalyzes iterative methyl transfer to the amino group of norbaeocystin to yield psilocybin via a monomethylated intermediate, baeocystin. 4-hydroxy-6-methyl-l-tryptophancan also be converted the decarboxylase PsiD, kinase PsiK, and methyltransferase PsiM into respectively 6-methyl-norbaeocystin, 6-methylbaeocystin, and 6-methylpsilocybin. PsiK kinase can also turn psilocin into psilocybin. This activity may represent a protective mechanism to rephosphorylate the unstable psilocin to the stable psilocybin in case of intracellular ester cleavage. Moreover, psiK is able to O-phosphorylate the quaternary amine 4-hydroxy-N,N,N-trimethyltryptamine (4-OH-TMT) to yield aeruginascin, another bioactive compound found in Psilocybe species. This chain is 4-hydroxytryptamine kinase, found in Psilocybe cubensis (Psychedelic mushroom).